The sequence spans 246 residues: Uridylate kinase (246 aa).

19–22 (KISG) serves as a coordination point for ATP. A UMP-binding site is contributed by G61. The ATP site is built by G62 and R66. UMP contacts are provided by residues D81 and 142–149 (TGNPFFTT). Positions 169, 170, 175, and 178 each coordinate ATP.

It belongs to the UMP kinase family. Homohexamer.

It is found in the cytoplasm. It carries out the reaction UMP + ATP = UDP + ADP. The protein operates within pyrimidine metabolism; CTP biosynthesis via de novo pathway; UDP from UMP (UMPK route): step 1/1. With respect to regulation, inhibited by UTP. Functionally, catalyzes the reversible phosphorylation of UMP to UDP. This is Uridylate kinase from Wolbachia sp. subsp. Brugia malayi (strain TRS).